Reading from the N-terminus, the 73-residue chain is UPF0235 protein LA_1736 (73 aa).

This sequence belongs to the UPF0235 family.

In Leptospira interrogans serogroup Icterohaemorrhagiae serovar Lai (strain 56601), this protein is UPF0235 protein LA_1736.